We begin with the raw amino-acid sequence, 151 residues long: Ribosome maturation factor RimP (151 aa).

Belongs to the RimP family.

The protein localises to the cytoplasm. Functionally, required for maturation of 30S ribosomal subunits. This is Ribosome maturation factor RimP from Caldicellulosiruptor bescii (strain ATCC BAA-1888 / DSM 6725 / KCTC 15123 / Z-1320) (Anaerocellum thermophilum).